Reading from the N-terminus, the 159-residue chain is 3-hydroxyacyl-[acyl-carrier-protein] dehydratase FabZ (159 aa).

The active site involves H59.

Belongs to the thioester dehydratase family. FabZ subfamily.

The protein localises to the cytoplasm. It catalyses the reaction a (3R)-hydroxyacyl-[ACP] = a (2E)-enoyl-[ACP] + H2O. In terms of biological role, involved in unsaturated fatty acids biosynthesis. Catalyzes the dehydration of short chain beta-hydroxyacyl-ACPs and long chain saturated and unsaturated beta-hydroxyacyl-ACPs. The protein is 3-hydroxyacyl-[acyl-carrier-protein] dehydratase FabZ of Caulobacter vibrioides (strain ATCC 19089 / CIP 103742 / CB 15) (Caulobacter crescentus).